Consider the following 231-residue polypeptide: Probable intron-encoded endonuclease 1 (231 aa).

It belongs to the LAGLIDADG endonuclease family.

The protein localises to the mitochondrion. In terms of biological role, endonuclease involved in mitochondrial 21S rRNA gene intron homing. In Wickerhamomyces canadensis (Yeast), this protein is Probable intron-encoded endonuclease 1.